The sequence spans 228 residues: 2,3-bisphosphoglycerate-dependent phosphoglycerate mutase (228 aa).

Substrate is bound by residues 8-15, 21-22, arginine 60, 87-90, lysine 98, 114-115, and 183-184; these read RHGQSVWN, TG, ERHY, RR, and GN. Catalysis depends on histidine 9, which acts as the Tele-phosphohistidine intermediate. The Proton donor/acceptor role is filled by glutamate 87.

Belongs to the phosphoglycerate mutase family. BPG-dependent PGAM subfamily.

The enzyme catalyses (2R)-2-phosphoglycerate = (2R)-3-phosphoglycerate. It functions in the pathway carbohydrate degradation; glycolysis; pyruvate from D-glyceraldehyde 3-phosphate: step 3/5. Functionally, catalyzes the interconversion of 2-phosphoglycerate and 3-phosphoglycerate. The chain is 2,3-bisphosphoglycerate-dependent phosphoglycerate mutase from Staphylococcus saprophyticus subsp. saprophyticus (strain ATCC 15305 / DSM 20229 / NCIMB 8711 / NCTC 7292 / S-41).